The chain runs to 291 residues: Formamidopyrimidine-DNA glycosylase (291 aa).

Catalysis depends on Pro2, which acts as the Schiff-base intermediate with DNA. Glu3 functions as the Proton donor in the catalytic mechanism. Lys58 serves as the catalytic Proton donor; for beta-elimination activity. The DNA site is built by His100, Arg123, and Lys166. The FPG-type zinc finger occupies 257–291 (SVYGREGKECSRCGMHIVRIVQSGRSSFYCPQCQK). Arg281 acts as the Proton donor; for delta-elimination activity in catalysis.

It belongs to the FPG family. As to quaternary structure, monomer. It depends on Zn(2+) as a cofactor.

It carries out the reaction Hydrolysis of DNA containing ring-opened 7-methylguanine residues, releasing 2,6-diamino-4-hydroxy-5-(N-methyl)formamidopyrimidine.. The catalysed reaction is 2'-deoxyribonucleotide-(2'-deoxyribose 5'-phosphate)-2'-deoxyribonucleotide-DNA = a 3'-end 2'-deoxyribonucleotide-(2,3-dehydro-2,3-deoxyribose 5'-phosphate)-DNA + a 5'-end 5'-phospho-2'-deoxyribonucleoside-DNA + H(+). Its function is as follows. Involved in base excision repair of DNA damaged by oxidation or by mutagenic agents. Acts as a DNA glycosylase that recognizes and removes damaged bases. Has a preference for oxidized purines, such as 7,8-dihydro-8-oxoguanine (8-oxoG). Has AP (apurinic/apyrimidinic) lyase activity and introduces nicks in the DNA strand. Cleaves the DNA backbone by beta-delta elimination to generate a single-strand break at the site of the removed base with both 3'- and 5'-phosphates. In Bartonella bacilliformis (strain ATCC 35685 / KC583 / Herrer 020/F12,63), this protein is Formamidopyrimidine-DNA glycosylase.